Consider the following 85-residue polypeptide: Large ribosomal subunit protein bL27 (85 aa).

The protein belongs to the bacterial ribosomal protein bL27 family.

This is Large ribosomal subunit protein bL27 from Cellvibrio japonicus (strain Ueda107) (Pseudomonas fluorescens subsp. cellulosa).